Here is a 297-residue protein sequence, read N- to C-terminus: Elongation factor Ts (297 aa).

An involved in Mg(2+) ion dislocation from EF-Tu region spans residues 82-85 (TDFV). Low complexity predominate over residues 223-265 (AQTAAAAETAPPEVSEPEPAAAVTAEEPTPEPVAAAEQPAEPV). A disordered region spans residues 223 to 297 (AQTAAAAETA…GKSRSNKKKK (75 aa)). Residues 286–297 (SGGKSRSNKKKK) show a composition bias toward basic residues.

Belongs to the EF-Ts family.

Its subcellular location is the cytoplasm. Functionally, associates with the EF-Tu.GDP complex and induces the exchange of GDP to GTP. It remains bound to the aminoacyl-tRNA.EF-Tu.GTP complex up to the GTP hydrolysis stage on the ribosome. The protein is Elongation factor Ts of Thermosynechococcus vestitus (strain NIES-2133 / IAM M-273 / BP-1).